Here is a 416-residue protein sequence, read N- to C-terminus: UDP-N-acetylglucosamine 1-carboxyvinyltransferase (416 aa).

Phosphoenolpyruvate is bound at residue 22–23; that stretch reads KN. A UDP-N-acetyl-alpha-D-glucosamine-binding site is contributed by Arg-91. Cys-115 (proton donor) is an active-site residue. Cys-115 is modified (2-(S-cysteinyl)pyruvic acid O-phosphothioketal). UDP-N-acetyl-alpha-D-glucosamine is bound by residues 120 to 124, Asp-305, and Ile-327; that span reads RPIDL.

It belongs to the EPSP synthase family. MurA subfamily.

It localises to the cytoplasm. It carries out the reaction phosphoenolpyruvate + UDP-N-acetyl-alpha-D-glucosamine = UDP-N-acetyl-3-O-(1-carboxyvinyl)-alpha-D-glucosamine + phosphate. The protein operates within cell wall biogenesis; peptidoglycan biosynthesis. Its function is as follows. Cell wall formation. Adds enolpyruvyl to UDP-N-acetylglucosamine. The polypeptide is UDP-N-acetylglucosamine 1-carboxyvinyltransferase (Buchnera aphidicola subsp. Acyrthosiphon pisum (strain APS) (Acyrthosiphon pisum symbiotic bacterium)).